The following is a 101-amino-acid chain: Ubiquitin-related modifier 1 homolog (101 aa).

Glycine 101 carries the 1-thioglycine modification. Glycine 101 participates in a covalent cross-link: Glycyl lysine isopeptide (Gly-Lys) (interchain with K-? in acceptor proteins).

This sequence belongs to the URM1 family. In terms of assembly, interacts with cer. C-terminal thiocarboxylation occurs in 2 steps, it is first acyl-adenylated (-COAMP) via the hesA/moeB/thiF part of the MOCS3 homolog, then thiocarboxylated (-COSH) via the rhodanese domain of the MOCS3 homolog.

The protein resides in the cytoplasm. Its pathway is tRNA modification; 5-methoxycarbonylmethyl-2-thiouridine-tRNA biosynthesis. Functionally, acts as a sulfur carrier required for 2-thiolation of mcm(5)S(2)U at tRNA wobble positions of cytosolic tRNA(Lys), tRNA(Glu) and tRNA(Gln). Serves as sulfur donor in tRNA 2-thiolation reaction by being thiocarboxylated (-COSH) at its C-terminus by MOCS3. The sulfur is then transferred to tRNA to form 2-thiolation of mcm(5)S(2)U. Also acts as a ubiquitin-like protein (UBL) that is covalently conjugated via an isopeptide bond to lysine residues of target proteins such as Prx2/Jafrac1, Ciao1, Eip71CD and GILT1. The thiocarboxylated form serves as substrate for conjugation and oxidative stress specifically induces the formation of UBL-protein conjugates. This Drosophila erecta (Fruit fly) protein is Ubiquitin-related modifier 1 homolog.